A 129-amino-acid chain; its full sequence is SPbeta prophage-derived protein NrdI (129 aa).

This sequence belongs to the NrdI family.

Its function is as follows. Probably involved in ribonucleotide reductase function. This is SPbeta prophage-derived protein NrdI (nrdIB) from Bacillus subtilis (strain 168).